The sequence spans 273 residues: MVKIQVTPDLSIGDGQPFALIGGPCVIESEDFCLKMADQIRQICDRLQISYIFKSSFDKANRTSIDSFRGQSLEDGLQTLQRVKEKIGVPVLTDIHESYQAAIVAEVVDVLQIPAFLCRQTDLLLAAAATGRVINVKKGQFLAPWDMQNVVKKLEQGGAQNILLTERGSSFGYNTLVVDFRSLPQMRALGYPVVFDATHSVQMPGGKGNSSGGQREFVPYLARAAVAVGIDALFMEIHENPEQALSDGPNMVYLSQLEAYLQQLLAIRTALAW.

Belongs to the KdsA family.

Its subcellular location is the cytoplasm. The catalysed reaction is D-arabinose 5-phosphate + phosphoenolpyruvate + H2O = 3-deoxy-alpha-D-manno-2-octulosonate-8-phosphate + phosphate. Its pathway is carbohydrate biosynthesis; 3-deoxy-D-manno-octulosonate biosynthesis; 3-deoxy-D-manno-octulosonate from D-ribulose 5-phosphate: step 2/3. It participates in bacterial outer membrane biogenesis; lipopolysaccharide biosynthesis. The protein is 2-dehydro-3-deoxyphosphooctonate aldolase of Cyanothece sp. (strain PCC 7425 / ATCC 29141).